The primary structure comprises 316 residues: Malate dehydrogenase (316 aa).

Residues 12-17 and D36 contribute to the NAD(+) site; that span reads GAGNIG. 2 residues coordinate substrate: R85 and R91. NAD(+)-binding positions include N98 and 121 to 123; that span reads VTN. The substrate site is built by N123 and R154. Residue H178 is the Proton acceptor of the active site.

It belongs to the LDH/MDH superfamily. MDH type 3 family.

The catalysed reaction is (S)-malate + NAD(+) = oxaloacetate + NADH + H(+). Catalyzes the reversible oxidation of malate to oxaloacetate. The protein is Malate dehydrogenase of Wolbachia pipientis wMel.